Consider the following 396-residue polypeptide: L-lactate dehydrogenase (396 aa).

Positions methionine 1–glycine 380 constitute an FMN hydroxy acid dehydrogenase domain. Tyrosine 24 contributes to the substrate binding site. Residues serine 106 and glutamine 127 each coordinate FMN. Tyrosine 129 contributes to the substrate binding site. Residue threonine 155 participates in FMN binding. Arginine 164 is a substrate binding site. Residue lysine 251 participates in FMN binding. Histidine 275 (proton acceptor) is an active-site residue. Arginine 278 serves as a coordination point for substrate. Aspartate 306–arginine 330 provides a ligand contact to FMN.

The protein belongs to the FMN-dependent alpha-hydroxy acid dehydrogenase family. Requires FMN as cofactor.

Its subcellular location is the cell inner membrane. It carries out the reaction (S)-lactate + A = pyruvate + AH2. Its function is as follows. Catalyzes the conversion of L-lactate to pyruvate. Is coupled to the respiratory chain. In Salmonella typhimurium (strain LT2 / SGSC1412 / ATCC 700720), this protein is L-lactate dehydrogenase.